The primary structure comprises 518 residues: Probable bifunctional methylthioribulose-1-phosphate dehydratase/enolase-phosphatase E1 (518 aa).

Residues 1 to 247 are methylthioribulose-1-phosphate dehydratase; it reads MAAAPPAVAV…AIKLHQIGLD (247 aa). C119 lines the substrate pocket. Residues H137 and H139 each contribute to the Zn(2+) site. The active-site Proton donor/acceptor; for methylthioribulose-1-phosphate dehydratase activity is E162. Residue H212 coordinates Zn(2+). Positions 279–518 are enolase-phosphatase E1; the sequence is IVLDIEGTTT…FKTITSFAEI (240 aa). Residues D282 and E284 each coordinate Mg(2+). Substrate contacts are provided by residues 417–418 and K451; that span reads SS. D477 lines the Mg(2+) pocket.

It in the N-terminal section; belongs to the aldolase class II family. MtnB subfamily. This sequence in the C-terminal section; belongs to the HAD-like hydrolase superfamily. MasA/MtnC family. Zn(2+) serves as cofactor. Requires Mg(2+) as cofactor.

It carries out the reaction 5-(methylsulfanyl)-D-ribulose 1-phosphate = 5-methylsulfanyl-2,3-dioxopentyl phosphate + H2O. The enzyme catalyses 5-methylsulfanyl-2,3-dioxopentyl phosphate + H2O = 1,2-dihydroxy-5-(methylsulfanyl)pent-1-en-3-one + phosphate. Its pathway is amino-acid biosynthesis; L-methionine biosynthesis via salvage pathway; L-methionine from S-methyl-5-thio-alpha-D-ribose 1-phosphate: step 2/6. It participates in amino-acid biosynthesis; L-methionine biosynthesis via salvage pathway; L-methionine from S-methyl-5-thio-alpha-D-ribose 1-phosphate: step 3/6. It functions in the pathway amino-acid biosynthesis; L-methionine biosynthesis via salvage pathway; L-methionine from S-methyl-5-thio-alpha-D-ribose 1-phosphate: step 4/6. The chain is Probable bifunctional methylthioribulose-1-phosphate dehydratase/enolase-phosphatase E1 from Populus trichocarpa (Western balsam poplar).